Here is a 505-residue protein sequence, read N- to C-terminus: Cyanidin 3-O-glucoside 7-O-glucosyltransferase (acyl-glucose) (505 aa).

The signal sequence occupies residues 1 to 25 (MCPSFLVTLLLLQLSSLVVVLVVWA). A beta-D-glucoside-binding positions include Gln52, His152, and 197–198 (NE). Glu198 functions as the Proton donor in the catalytic mechanism. The cysteines at positions 217 and 225 are disulfide-linked. N-linked (GlcNAc...) asparagine glycosylation is found at Asn224, Asn229, and Asn324. 2 residues coordinate a beta-D-glucoside: Tyr341 and Glu403. The Nucleophile role is filled by Glu403. Residues Asn411 and Asn437 are each glycosylated (N-linked (GlcNAc...) asparagine). Positions 447 and 463 each coordinate a beta-D-glucoside. N-linked (GlcNAc...) asparagine glycosylation is present at Asn494.

The protein belongs to the glycosyl hydrolase 1 family.

It localises to the vacuole. It catalyses the reaction 1-O-(4-hydroxy-3-methoxybenzoyl)-beta-D-glucose + cyanidin 3-O-beta-D-glucoside = cyanidin 3,7-di-O-beta-D-glucoside + vanillate. Its pathway is pigment biosynthesis; anthocyanin biosynthesis. Beta-glycosidase that catalyzes the transfer of glucose moiety to anthocyanidin 3-glucoside at the 7 position. Anthocyanins are ubiquitous colored pigments that are responsible for variations in petal color. This chain is Cyanidin 3-O-glucoside 7-O-glucosyltransferase (acyl-glucose) (AA7GT), found in Delphinium grandiflorum (Siberian larkspur).